A 553-amino-acid polypeptide reads, in one-letter code: Arginine--tRNA ligase (553 aa).

The 'HIGH' region motif lies at 130-140; it reads ANPTGDLHIGH.

This sequence belongs to the class-I aminoacyl-tRNA synthetase family. As to quaternary structure, monomer.

Its subcellular location is the cytoplasm. The catalysed reaction is tRNA(Arg) + L-arginine + ATP = L-arginyl-tRNA(Arg) + AMP + diphosphate. This Staphylococcus aureus (strain MSSA476) protein is Arginine--tRNA ligase.